A 76-amino-acid polypeptide reads, in one-letter code: Conotoxin VnMSGL-0112 (76 aa).

The first 20 residues, 1 to 20, serve as a signal peptide directing secretion; that stretch reads MSGLGIMVLTLLLLVSMATS. The propeptide occupies 21–45; the sequence is HQDGRGKQATQRDAINVRRRRSITR. 3 cysteine pairs are disulfide-bonded: cysteine 49-cysteine 61, cysteine 53-cysteine 70, and cysteine 60-cysteine 74.

Belongs to the conotoxin O3 superfamily. Expressed by the venom duct.

The protein localises to the secreted. The chain is Conotoxin VnMSGL-0112 from Conus ventricosus (Mediterranean cone).